Here is a 320-residue protein sequence, read N- to C-terminus: MIKKIGVLTSGGDAPGMNAAIRGVVRAALSEGLEVCGIYDGYLGLYEDRMINLDRYSVSDMINRGGTFLGSARFPEFRNEDVRSVAIENMKKRGIDALVVIGGDGSYMGAKRLTEMGFPCIGLPGTIDNDVAGTDYTIGYFTALETVVEAIDRLRDTSSSHQRISIVEVMGRYCGDLTLAAAIAGGCEFIVLPEIPYTREELVNEIKAGIAKGKKHAIVAITEHICDINELAKYIEQETKRETRATVLGHIQRGGAPVAYDRILASRMGAYSIELLLQGYGGRCVGIQNEKMVHHDIIDAIENMKRPFKGDWLDTAKKLY.

Gly-12 provides a ligand contact to ATP. Residues 22-26 (RGVVR) and 55-60 (RYSVSD) contribute to the ADP site. Residues 73–74 (RF) and 103–106 (GDGS) contribute to the ATP site. Residue Asp-104 participates in Mg(2+) binding. A substrate-binding site is contributed by 126–128 (TID). Asp-128 functions as the Proton acceptor in the catalytic mechanism. Arg-155 is a binding site for ADP. Residues Arg-163 and 170-172 (MGR) each bind substrate. Residues 186–188 (GCE), Lys-212, and 214–216 (KKH) contribute to the ADP site. Substrate contacts are provided by residues Glu-223, Arg-244, and 250-253 (HIQR).

It belongs to the phosphofructokinase type A (PFKA) family. ATP-dependent PFK group I subfamily. Prokaryotic clade 'B1' sub-subfamily. In terms of assembly, homotetramer. Mg(2+) serves as cofactor.

It localises to the cytoplasm. The catalysed reaction is beta-D-fructose 6-phosphate + ATP = beta-D-fructose 1,6-bisphosphate + ADP + H(+). Its pathway is carbohydrate degradation; glycolysis; D-glyceraldehyde 3-phosphate and glycerone phosphate from D-glucose: step 3/4. With respect to regulation, allosterically activated by ADP and other diphosphonucleosides, and allosterically inhibited by phosphoenolpyruvate. Functionally, catalyzes the phosphorylation of D-fructose 6-phosphate to fructose 1,6-bisphosphate by ATP, the first committing step of glycolysis. The polypeptide is ATP-dependent 6-phosphofructokinase (Erwinia tasmaniensis (strain DSM 17950 / CFBP 7177 / CIP 109463 / NCPPB 4357 / Et1/99)).